A 187-amino-acid chain; its full sequence is Casparian strip membrane protein 5 (187 aa).

The Cytoplasmic segment spans residues 1 to 24 (MKSGQAEIVETSKGIQKSGLMSRR). A helical membrane pass occupies residues 25–45 (IAILEFILRIVAFFNTIGSAI). The Extracellular portion of the chain corresponds to 46–74 (LMGTTHETLPFFTQFIRFQAEYNDLPALT). Residues 75 to 95 (FFVVANAVVSGYLIMSLTLAF) traverse the membrane as a helical segment. Residues 96 to 107 (VHIVKRKTQNTR) are Cytoplasmic-facing. A helical transmembrane segment spans residues 108 to 128 (ILLIVLDVAMLGLLSAGASSA). Topologically, residues 129-161 (AAIVYLAHNGNNKTNWFAICQQFNSFCERISGS) are extracellular. An N-linked (GlcNAc...) asparagine glycan is attached at N140. The helical transmembrane segment at 162–182 (LIGSFIAVVLLILLILLSAIA) threads the bilayer. Residues 183–187 (LSRRH) are Cytoplasmic-facing.

This sequence belongs to the Casparian strip membrane proteins (CASP) family. Homodimer and heterodimers.

Its subcellular location is the cell membrane. Regulates membrane-cell wall junctions and localized cell wall deposition. Required for establishment of the Casparian strip membrane domain (CSD) and the subsequent formation of Casparian strips, a cell wall modification of the root endodermis that determines an apoplastic barrier between the intraorganismal apoplasm and the extraorganismal apoplasm and prevents lateral diffusion. This is Casparian strip membrane protein 5 from Arabidopsis lyrata subsp. lyrata (Lyre-leaved rock-cress).